A 345-amino-acid chain; its full sequence is D-fructose 1,6-bisphosphatase class 2/sedoheptulose 1,7-bisphosphatase (345 aa).

Mn(2+)-binding residues include aspartate 33, glutamate 57, aspartate 97, and glutamate 100. Substrate-binding positions include 100 to 102 (EGT), tyrosine 131, 176 to 178 (RPR), and 198 to 200 (DGD). Glutamate 225 lines the Mn(2+) pocket.

It belongs to the FBPase class 2 family. In terms of assembly, homotetramer. Mn(2+) is required as a cofactor.

The catalysed reaction is beta-D-fructose 1,6-bisphosphate + H2O = beta-D-fructose 6-phosphate + phosphate. It carries out the reaction D-sedoheptulose 1,7-bisphosphate + H2O = D-sedoheptulose 7-phosphate + phosphate. Its pathway is carbohydrate biosynthesis; Calvin cycle. Its function is as follows. Catalyzes the hydrolysis of fructose 1,6-bisphosphate (Fru 1,6-P2) and sedoheptulose 1,7-bisphosphate (Sed 1,7-P2) to fructose 6-phosphate and sedoheptulose 7-phosphate, respectively. This chain is D-fructose 1,6-bisphosphatase class 2/sedoheptulose 1,7-bisphosphatase, found in Synechocystis sp. (strain ATCC 27184 / PCC 6803 / Kazusa).